The following is an 803-amino-acid chain: Translation initiation factor IF-2 (803 aa).

Basic and acidic residues predominate over residues P65–T75. Residues P65–K186 form a disordered region. Residues N175 to L185 are compositionally biased toward basic residues. The 169-residue stretch at I300 to E468 folds into the tr-type G domain. The segment at G309–T316 is G1. GTP is bound at residue G309–T316. A G2 region spans residues G334–H338. The G3 stretch occupies residues D355–G358. GTP is bound by residues D355–H359 and N409–D412. Positions N409 to D412 are G4. The interval S445 to K447 is G5.

Belongs to the TRAFAC class translation factor GTPase superfamily. Classic translation factor GTPase family. IF-2 subfamily.

The protein localises to the cytoplasm. Functionally, one of the essential components for the initiation of protein synthesis. Protects formylmethionyl-tRNA from spontaneous hydrolysis and promotes its binding to the 30S ribosomal subunits. Also involved in the hydrolysis of GTP during the formation of the 70S ribosomal complex. The protein is Translation initiation factor IF-2 of Tropheryma whipplei (strain Twist) (Whipple's bacillus).